A 227-amino-acid chain; its full sequence is tRNA (guanine-N(1)-)-methyltransferase (227 aa).

Residues glycine 112 and 132–137 (LGDFVL) contribute to the S-adenosyl-L-methionine site.

It belongs to the RNA methyltransferase TrmD family. As to quaternary structure, homodimer.

The protein localises to the cytoplasm. It catalyses the reaction guanosine(37) in tRNA + S-adenosyl-L-methionine = N(1)-methylguanosine(37) in tRNA + S-adenosyl-L-homocysteine + H(+). Specifically methylates guanosine-37 in various tRNAs. The sequence is that of tRNA (guanine-N(1)-)-methyltransferase from Gloeobacter violaceus (strain ATCC 29082 / PCC 7421).